The following is a 557-amino-acid chain: CTP synthase (557 aa).

Positions 1–267 are amidoligase domain; sequence MAKFVFVTGG…CREVLDVLDL (267 aa). Serine 13 contributes to the CTP binding site. Serine 13 contributes to the UTP binding site. Residues 14–19 and aspartate 71 contribute to the ATP site; that span reads SIGKGI. Mg(2+) is bound by residues aspartate 71 and glutamate 141. CTP is bound by residues 148–150, 188–193, and lysine 224; these read DIE and KTKPTQ. Residues 188-193 and lysine 224 each bind UTP; that span reads KTKPTQ. The Glutamine amidotransferase type-1 domain occupies 292-534; that stretch reads KVALVGKYVQ…IEAAQQRLPC (243 aa). Residue glycine 354 coordinates L-glutamine. Cysteine 381 (nucleophile; for glutamine hydrolysis) is an active-site residue. Residues 382-385, glutamate 405, and arginine 462 contribute to the L-glutamine site; that span reads LGMQ. Catalysis depends on residues histidine 507 and glutamate 509. The disordered stretch occupies residues 532–557; that stretch reads LPCSPSEAMRQQNNSAAGSSHPSLQP. The segment covering 540-557 has biased composition (polar residues); sequence MRQQNNSAAGSSHPSLQP.

Belongs to the CTP synthase family. Homotetramer.

The enzyme catalyses UTP + L-glutamine + ATP + H2O = CTP + L-glutamate + ADP + phosphate + 2 H(+). It carries out the reaction L-glutamine + H2O = L-glutamate + NH4(+). The catalysed reaction is UTP + NH4(+) + ATP = CTP + ADP + phosphate + 2 H(+). It functions in the pathway pyrimidine metabolism; CTP biosynthesis via de novo pathway; CTP from UDP: step 2/2. Its activity is regulated as follows. Allosterically activated by GTP, when glutamine is the substrate; GTP has no effect on the reaction when ammonia is the substrate. The allosteric effector GTP functions by stabilizing the protein conformation that binds the tetrahedral intermediate(s) formed during glutamine hydrolysis. Inhibited by the product CTP, via allosteric rather than competitive inhibition. Catalyzes the ATP-dependent amination of UTP to CTP with either L-glutamine or ammonia as the source of nitrogen. Regulates intracellular CTP levels through interactions with the four ribonucleotide triphosphates. In Synechococcus sp. (strain CC9311), this protein is CTP synthase.